Here is a 186-residue protein sequence, read N- to C-terminus: ATP synthase subunit b, chloroplastic (186 aa).

Residues 27 to 49 (LATNPINLSVVLGVLIFFGKGVL) form a helical membrane-spanning segment.

This sequence belongs to the ATPase B chain family. In terms of assembly, F-type ATPases have 2 components, F(1) - the catalytic core - and F(0) - the membrane proton channel. F(1) has five subunits: alpha(3), beta(3), gamma(1), delta(1), epsilon(1). F(0) has four main subunits: a(1), b(1), b'(1) and c(10-14). The alpha and beta chains form an alternating ring which encloses part of the gamma chain. F(1) is attached to F(0) by a central stalk formed by the gamma and epsilon chains, while a peripheral stalk is formed by the delta, b and b' chains.

It localises to the plastid. The protein resides in the chloroplast thylakoid membrane. F(1)F(0) ATP synthase produces ATP from ADP in the presence of a proton or sodium gradient. F-type ATPases consist of two structural domains, F(1) containing the extramembraneous catalytic core and F(0) containing the membrane proton channel, linked together by a central stalk and a peripheral stalk. During catalysis, ATP synthesis in the catalytic domain of F(1) is coupled via a rotary mechanism of the central stalk subunits to proton translocation. Its function is as follows. Component of the F(0) channel, it forms part of the peripheral stalk, linking F(1) to F(0). In Illicium oligandrum (Star anise), this protein is ATP synthase subunit b, chloroplastic.